The following is a 304-amino-acid chain: MHIRILGSAAGGGFPQWNCNCRNCRGVRAGTLRAQPRTQSSIALSDDGGEWVLCNASPDIRAQLEAFPALQPARQLRDTAIAGIVLLDSQIDHCTGLLTLREGCPHQVWCTEMVHQDLTSGFPLFNMLSHWNGGLQHQLIELDAKPFTIPACPGLSITAIALRSSAPPYSPHRGNPHPGDNIGLFIEDRRSGRSLFYAPGLGQVEEHLLSWMRRADCLLVDGTLWRDDEMQLCEVGDKLGSEMGHLCQSGPGGMIEVLDGLPSVRKILIHINNTNPILDLDSPERAELDARGIEVAFDGMSIHL.

Belongs to the PqqB family.

Its pathway is cofactor biosynthesis; pyrroloquinoline quinone biosynthesis. Functionally, may be involved in the transport of PQQ or its precursor to the periplasm. The sequence is that of Coenzyme PQQ synthesis protein B from Stutzerimonas stutzeri (Pseudomonas stutzeri).